An 84-amino-acid chain; its full sequence is ATP synthase subunit c (84 aa).

Transmembrane regions (helical) follow at residues 21 to 38 and 60 to 80; these read ALGA…IGKI and MIII…VCLL.

The protein belongs to the ATPase C chain family. F-type ATPases have 2 components, F(1) - the catalytic core - and F(0) - the membrane proton channel. F(1) has five subunits: alpha(3), beta(3), gamma(1), delta(1), epsilon(1). F(0) has three main subunits: a(1), b(2) and c(10-14). The alpha and beta chains form an alternating ring which encloses part of the gamma chain. F(1) is attached to F(0) by a central stalk formed by the gamma and epsilon chains, while a peripheral stalk is formed by the delta and b chains.

Its subcellular location is the cell inner membrane. F(1)F(0) ATP synthase produces ATP from ADP in the presence of a proton or sodium gradient. F-type ATPases consist of two structural domains, F(1) containing the extramembraneous catalytic core and F(0) containing the membrane proton channel, linked together by a central stalk and a peripheral stalk. During catalysis, ATP synthesis in the catalytic domain of F(1) is coupled via a rotary mechanism of the central stalk subunits to proton translocation. In terms of biological role, key component of the F(0) channel; it plays a direct role in translocation across the membrane. A homomeric c-ring of between 10-14 subunits forms the central stalk rotor element with the F(1) delta and epsilon subunits. The polypeptide is ATP synthase subunit c (Phocaeicola vulgatus (strain ATCC 8482 / DSM 1447 / JCM 5826 / CCUG 4940 / NBRC 14291 / NCTC 11154) (Bacteroides vulgatus)).